We begin with the raw amino-acid sequence, 288 residues long: 4-hydroxy-3-methylbut-2-enyl diphosphate reductase (288 aa).

[4Fe-4S] cluster is bound at residue cysteine 12. Residues histidine 42 and histidine 77 each contribute to the (2E)-4-hydroxy-3-methylbut-2-enyl diphosphate site. Residues histidine 42 and histidine 77 each coordinate dimethylallyl diphosphate. Isopentenyl diphosphate is bound by residues histidine 42 and histidine 77. A [4Fe-4S] cluster-binding site is contributed by cysteine 99. Histidine 127 is a binding site for (2E)-4-hydroxy-3-methylbut-2-enyl diphosphate. Histidine 127 contributes to the dimethylallyl diphosphate binding site. Histidine 127 serves as a coordination point for isopentenyl diphosphate. Residue glutamate 129 is the Proton donor of the active site. (2E)-4-hydroxy-3-methylbut-2-enyl diphosphate is bound at residue threonine 165. Cysteine 193 contacts [4Fe-4S] cluster. Positions 221, 222, 223, and 265 each coordinate (2E)-4-hydroxy-3-methylbut-2-enyl diphosphate. Positions 221, 222, 223, and 265 each coordinate dimethylallyl diphosphate. Residues serine 221, serine 222, asparagine 223, and serine 265 each coordinate isopentenyl diphosphate.

It belongs to the IspH family. [4Fe-4S] cluster is required as a cofactor.

It catalyses the reaction isopentenyl diphosphate + 2 oxidized [2Fe-2S]-[ferredoxin] + H2O = (2E)-4-hydroxy-3-methylbut-2-enyl diphosphate + 2 reduced [2Fe-2S]-[ferredoxin] + 2 H(+). It carries out the reaction dimethylallyl diphosphate + 2 oxidized [2Fe-2S]-[ferredoxin] + H2O = (2E)-4-hydroxy-3-methylbut-2-enyl diphosphate + 2 reduced [2Fe-2S]-[ferredoxin] + 2 H(+). It participates in isoprenoid biosynthesis; dimethylallyl diphosphate biosynthesis; dimethylallyl diphosphate from (2E)-4-hydroxy-3-methylbutenyl diphosphate: step 1/1. Its pathway is isoprenoid biosynthesis; isopentenyl diphosphate biosynthesis via DXP pathway; isopentenyl diphosphate from 1-deoxy-D-xylulose 5-phosphate: step 6/6. Catalyzes the conversion of 1-hydroxy-2-methyl-2-(E)-butenyl 4-diphosphate (HMBPP) into a mixture of isopentenyl diphosphate (IPP) and dimethylallyl diphosphate (DMAPP). Acts in the terminal step of the DOXP/MEP pathway for isoprenoid precursor biosynthesis. The polypeptide is 4-hydroxy-3-methylbut-2-enyl diphosphate reductase (Thermoanaerobacter pseudethanolicus (strain ATCC 33223 / 39E) (Clostridium thermohydrosulfuricum)).